A 235-amino-acid chain; its full sequence is Fibrillarin-like rRNA/tRNA 2'-O-methyltransferase (235 aa).

S-adenosyl-L-methionine is bound by residues 91 to 92 (TT), 110 to 111 (EF), 137 to 138 (DA), and 157 to 160 (DVAQ).

It belongs to the methyltransferase superfamily. Fibrillarin family. Interacts with nop5. Component of box C/D small ribonucleoprotein (sRNP) particles that contain rpl7ae, FlpA and nop5, plus a guide RNA.

Involved in pre-rRNA and tRNA processing. Utilizes the methyl donor S-adenosyl-L-methionine to catalyze the site-specific 2'-hydroxyl methylation of ribose moieties in rRNA and tRNA. Site specificity is provided by a guide RNA that base pairs with the substrate. Methylation occurs at a characteristic distance from the sequence involved in base pairing with the guide RNA. The chain is Fibrillarin-like rRNA/tRNA 2'-O-methyltransferase from Pyrobaculum aerophilum (strain ATCC 51768 / DSM 7523 / JCM 9630 / CIP 104966 / NBRC 100827 / IM2).